Consider the following 661-residue polypeptide: MADNKGRRDTFDVSGDTNTNATSNKRSIEDKIEADLDKIMKKGSFTPADALELYNKYGDENEYLVDKILKMNSKKNLKIRKQARLLAEKIYQRYNNGTKPLHEILEKMLKYKKENKWSDKEYDEFRKELTNLLTGNRALEIDYNQNLTSYKSRINRALGGIKNEEVIRQADSGLRIKDSEKGVLQDILNMYDRTANLHRTVFMHSLMYEDCSLVAITGEFDRKRHLATNYIDPILACMFIPKIDIFEIHMLYANFGSIIKARSERKQITNEPDLLLYYDITSDPNDVVCEINSPIADLRNRYRVQIALWGIVMKLRNGNYYDSEAMDDFSKTLDACRNNLYDNADLAYNNDEGAIMRRLLSVFSLRPTIIVTKPVYSIASFAMGQLMPQLIMGANGVPSPFGQSMNPFNNQPIYTITSIPMITLQIPPITDNAEPIDLRSATTQTLWVNENKTIIPKEQSIIYSKEVLIFYINRRIQRIQLKTFSNPLSFSQLPLTMSSFERLNGYPVHVPDRLVLDRGDEVYNLRSVVSVTETKIGGLSTSLVEGLPSNSILGQNSQSTGIITGRTGLITKPRNFETGVFEPEYYLYDPFGASLPVRHPDQSGYFTNKPISHIPPLYSPSVDLTGGIENPSFFDRASRTGTIFIYAKPQGYNPNQPLSLF.

Over residues 1–11 (MADNKGRRDTF) the composition is skewed to basic and acidic residues. Residues 1–26 (MADNKGRRDTFDVSGDTNTNATSNKR) form a disordered region. Positions 15 to 25 (GDTNTNATSNK) are enriched in polar residues. Positions 112-140 (KKENKWSDKEYDEFRKELTNLLTGNRALE) form a coiled coil.

The protein resides in the virion. The chain is Putative core protein L410 from Acanthamoeba polyphaga (Amoeba).